The following is a 556-amino-acid chain: 2-succinyl-5-enolpyruvyl-6-hydroxy-3-cyclohexene-1-carboxylate synthase (556 aa).

Belongs to the TPP enzyme family. MenD subfamily. In terms of assembly, homodimer. Mg(2+) is required as a cofactor. The cofactor is Mn(2+). Thiamine diphosphate serves as cofactor.

It catalyses the reaction isochorismate + 2-oxoglutarate + H(+) = 5-enolpyruvoyl-6-hydroxy-2-succinyl-cyclohex-3-ene-1-carboxylate + CO2. It functions in the pathway quinol/quinone metabolism; 1,4-dihydroxy-2-naphthoate biosynthesis; 1,4-dihydroxy-2-naphthoate from chorismate: step 2/7. Its pathway is quinol/quinone metabolism; menaquinone biosynthesis. Functionally, catalyzes the thiamine diphosphate-dependent decarboxylation of 2-oxoglutarate and the subsequent addition of the resulting succinic semialdehyde-thiamine pyrophosphate anion to isochorismate to yield 2-succinyl-5-enolpyruvyl-6-hydroxy-3-cyclohexene-1-carboxylate (SEPHCHC). The protein is 2-succinyl-5-enolpyruvyl-6-hydroxy-3-cyclohexene-1-carboxylate synthase of Escherichia coli (strain ATCC 8739 / DSM 1576 / NBRC 3972 / NCIMB 8545 / WDCM 00012 / Crooks).